The chain runs to 424 residues: Elongation factor Tu, mitochondrial (424 aa).

The tr-type G domain occupies 36 to 234; sequence KPHVNVGTIG…VLDTKIPLPH (199 aa). A G1 region spans residues 45 to 52; the sequence is GHVDHGKT. 45 to 52 provides a ligand contact to GTP; sequence GHVDHGKT. The interval 86 to 90 is G2; sequence GITIT. Residues 107–110 form a G3 region; that stretch reads DCPG. Residues 107–111 and 162–165 each bind GTP; these read DCPGH and NKMD. Residues 162 to 165 are G4; that stretch reads NKMD. Residues 199-201 form a G5 region; that stretch reads AAA.

Belongs to the TRAFAC class translation factor GTPase superfamily. Classic translation factor GTPase family. EF-Tu/EF-1A subfamily.

The protein resides in the mitochondrion. In terms of biological role, this protein promotes the GTP-dependent binding of aminoacyl-tRNA to the A-site of ribosomes during protein biosynthesis. This Dictyostelium discoideum (Social amoeba) protein is Elongation factor Tu, mitochondrial (tufm).